The sequence spans 411 residues: Adenylosuccinate synthetase (411 aa).

Residues 11-17 (GDEGKGK) and 39-41 (GHT) contribute to the GTP site. Catalysis depends on aspartate 12, which acts as the Proton acceptor. Mg(2+) is bound by residues aspartate 12 and glycine 39. Residues 12-15 (DEGK), 37-40 (NAGH), threonine 121, arginine 135, glutamine 215, threonine 230, and arginine 294 contribute to the IMP site. Histidine 40 serves as the catalytic Proton donor. 290–296 (TTTKRPR) is a substrate binding site. GTP-binding positions include arginine 296, 322-324 (KLD), and 400-402 (STS).

The protein belongs to the adenylosuccinate synthetase family. Homodimer. It depends on Mg(2+) as a cofactor.

The protein resides in the cytoplasm. It catalyses the reaction IMP + L-aspartate + GTP = N(6)-(1,2-dicarboxyethyl)-AMP + GDP + phosphate + 2 H(+). It participates in purine metabolism; AMP biosynthesis via de novo pathway; AMP from IMP: step 1/2. In terms of biological role, plays an important role in the de novo pathway of purine nucleotide biosynthesis. Catalyzes the first committed step in the biosynthesis of AMP from IMP. The polypeptide is Adenylosuccinate synthetase (Helicobacter pylori (strain Shi470)).